The sequence spans 774 residues: Lysyl oxidase homolog 2 (774 aa).

The N-terminal stretch at 1-25 (MERRGSSCLCRCLALLALLPTLSLA) is a signal peptide. SRCR domains follow at residues 58-159 (LRLA…VVCS), 188-302 (IRAI…VSCV), 326-425 (VRLR…VRCN), and 435-544 (LRLN…VACS). 9 disulfide bridges follow: C84/C148, C97/C158, C128/C138, C218/C291, C231/C301, C265/C275, C351/C414, C364/C424, and C395/C405. An N-linked (GlcNAc...) asparagine glycan is attached at N288. N455 carries an N-linked (GlcNAc...) asparagine glycan. Intrachain disulfides connect C464–C530, C477–C543, and C511–C521. The interval 548-751 (PDLVLNAEIV…WMYNCHIGGS (204 aa)) is lysyl-oxidase like. D549 and L550 together coordinate Ca(2+). Intrachain disulfides connect C573–C625, C579–C695, C657–C673, and C663–C685. Cu cation contacts are provided by H626, H628, and H630. A glycan (N-linked (GlcNAc...) asparagine) is linked at N644. Residues 653–689 (KASFCLEDTECEGDIQKSYECANFGEQGITMGCWDMY) constitute a cross-link (lysine tyrosylquinone (Lys-Tyr)). Y689 is modified (2',4',5'-topaquinone). Residues E722, D724, N727, and N728 each contribute to the Ca(2+) site. C732 and C746 are disulfide-bonded.

The protein belongs to the lysyl oxidase family. As to quaternary structure, component of some chromatin repressor complex. Interacts with SNAI1. Interacts with TAF10. Interacts with HSPA5. Interacts with EFEMP2. Cu cation serves as cofactor. Requires lysine tyrosylquinone residue as cofactor. The lysine tyrosylquinone cross-link (LTQ) is generated by condensation of the epsilon-amino group of a lysine with a topaquinone produced by oxidation of tyrosine. Post-translationally, N-glycosylated. N-glycosylation on Asn-455 and Asn-644 may be essential for proper folding and secretion; may be composed of a fucosylated carbohydrates attached to a trimannose N-linked glycan core.

The protein localises to the secreted. Its subcellular location is the extracellular space. The protein resides in the extracellular matrix. It localises to the basement membrane. It is found in the nucleus. The protein localises to the chromosome. Its subcellular location is the endoplasmic reticulum. The catalysed reaction is L-lysyl-[protein] + O2 + H2O = (S)-2-amino-6-oxohexanoyl-[protein] + H2O2 + NH4(+). With respect to regulation, specifically inhibited by a mouse monoclonal antibody AB0023, inhibition occurs in a non-competitive manner. Its function is as follows. Mediates the post-translational oxidative deamination of lysine residues on target proteins leading to the formation of deaminated lysine (allysine). Acts as a transcription corepressor and specifically mediates deamination of trimethylated 'Lys-4' of histone H3 (H3K4me3), a specific tag for epigenetic transcriptional activation. Shows no activity against histone H3 when it is trimethylated on 'Lys-9' (H3K9me3) or 'Lys-27' (H3K27me3) or when 'Lys-4' is monomethylated (H3K4me1) or dimethylated (H3K4me2). Also mediates deamination of methylated TAF10, a member of the transcription factor IID (TFIID) complex, which induces release of TAF10 from promoters, leading to inhibition of TFIID-dependent transcription. LOXL2-mediated deamination of TAF10 results in transcriptional repression of genes required for embryonic stem cell pluripotency including POU5F1/OCT4, NANOG, KLF4 and SOX2. Involved in epithelial to mesenchymal transition (EMT) via interaction with SNAI1 and participates in repression of E-cadherin CDH1, probably by mediating deamination of histone H3. During EMT, involved with SNAI1 in negatively regulating pericentromeric heterochromatin transcription. SNAI1 recruits LOXL2 to pericentromeric regions to oxidize histone H3 and repress transcription which leads to release of heterochromatin component CBX5/HP1A, enabling chromatin reorganization and acquisition of mesenchymal traits. Interacts with the endoplasmic reticulum protein HSPA5 which activates the IRE1-XBP1 pathway of the unfolded protein response, leading to expression of several transcription factors involved in EMT and subsequent EMT induction. When secreted into the extracellular matrix, promotes cross-linking of extracellular matrix proteins by mediating oxidative deamination of peptidyl lysine residues in precursors to fibrous collagen and elastin. Acts as a regulator of sprouting angiogenesis, probably via collagen IV scaffolding. Acts as a regulator of chondrocyte differentiation, probably by regulating expression of factors that control chondrocyte differentiation. This chain is Lysyl oxidase homolog 2 (LOXL2), found in Bos taurus (Bovine).